We begin with the raw amino-acid sequence, 353 residues long: Inactive ADP-ribosyltransferase ARH2 (353 aa).

The residue at position 27 (serine 27) is a Phosphoserine.

It belongs to the ADP-ribosylglycohydrolase family. As to expression, expressed in the embryonic heart at E11.5.

The protein localises to the cytoplasm. Its subcellular location is the myofibril. It is found in the sarcomere. In terms of biological role, required for myofibril assembly and outgrowth of the cardiac chambers in the developing heart. Appears to be catalytically inactive, showing no activity against O-acetyl-ADP-ribose. In Mus musculus (Mouse), this protein is Inactive ADP-ribosyltransferase ARH2 (Adprhl1).